Reading from the N-terminus, the 1905-residue chain is Low-density lipoprotein receptor-related protein 4 (1905 aa).

Positions 1–20 (MRRWWGALLLGALLCAHGTA) are cleaved as a signal peptide. At 21–1723 (SNLECACGRS…VPAAPGEGLH (1703 aa)) the chain is on the extracellular side. LDL-receptor class A domains lie at 26-67 (ACGR…DGCT), 70-106 (TCSP…QDCP), 109-144 (ECEE…EQCD), 147-183 (KCSD…ESCP), 190-226 (PCNL…SDCS), 230-266 (PCRS…RNCT), 269-305 (MCTA…ENCE), and 311-350 (QCAS…QNCR). 30 disulfides stabilise this stretch: Cys-27–Cys-44, Cys-34–Cys-57, Cys-51–Cys-66, Cys-71–Cys-83, Cys-78–Cys-96, Cys-90–Cys-105, Cys-110–Cys-122, Cys-117–Cys-135, Cys-129–Cys-143, Cys-148–Cys-160, Cys-155–Cys-173, Cys-167–Cys-182, Cys-191–Cys-203, Cys-198–Cys-216, Cys-210–Cys-225, Cys-231–Cys-243, Cys-238–Cys-256, Cys-250–Cys-265, Cys-270–Cys-282, Cys-277–Cys-295, Cys-289–Cys-304, Cys-312–Cys-324, Cys-319–Cys-337, Cys-331–Cys-349, Cys-358–Cys-369, Cys-365–Cys-378, Cys-380–Cys-393, Cys-399–Cys-409, Cys-405–Cys-418, and Cys-420–Cys-433. Asn-264 carries an N-linked (GlcNAc...) asparagine glycan. In terms of domain architecture, EGF-like 1; atypical spans 354–394 (GEENCNVNNGGCAQKCQMIRGAVQCTCHTGYRLTEDGRTCQ). The 40-residue stretch at 395-434 (DVNECAEEGYCSQGCTNSEGAFQCWCEAGYELRPDRRSCK) folds into the EGF-like 2; calcium-binding domain. LDL-receptor class B repeat units lie at residues 480 to 522 (ELVF…DWVH), 523 to 565 (DKLY…HPME), 566 to 609 (GTIY…DYAG), 610 to 652 (RRMY…FEDS), and 653 to 693 (LYWT…LHPQ). Asn-498 carries an N-linked (GlcNAc...) asparagine glycan. Residues 698-737 (GKNRCGDNNGGCTHLCLPSGQNYTCACPTGFRKINSHACA) enclose the EGF-like 3 domain. Cystine bridges form between Cys-702/Cys-713, Cys-709/Cys-722, and Cys-724/Cys-736. Asn-719 is a glycosylation site (N-linked (GlcNAc...) asparagine). 5 LDL-receptor class B repeats span residues 785 to 827 (DHVY…DWVT), 828 to 870 (NKLY…EPMG), 871 to 914 (GYMY…DYGS), 915 to 956 (QRLY…LYGQ), and 957 to 998 (RIYW…FHRQ). An N-linked (GlcNAc...) asparagine glycan is attached at Asn-901. The N-linked (GlcNAc...) asparagine glycan is linked to Asn-1077. LDL-receptor class B repeat units follow at residues 1093–1135 (GKVY…DAIG), 1136–1178 (RKVY…YHEM), 1179–1222 (GFMY…DKTS), 1223–1263 (SQLL…LLDS), 1264–1306 (YIYW…DRAQ), 1397–1439 (GKVY…DWVA), 1440–1482 (RNLY…FPRK), 1483–1526 (GYLF…DYDT), 1527–1568 (RRIY…QDRW), and 1569–1610 (IYWT…SPQR). Asn-1415 and Asn-1467 each carry an N-linked (GlcNAc...) asparagine glycan. Positions 1659 to 1696 (PRATSLNEKSPVLPNTLPTTLHSSTTRTRTSPEGAEGR) are disordered. Positions 1671 to 1690 (LPNTLPTTLHSSTTRTRTSP) are enriched in low complexity. The helical transmembrane segment at 1724–1746 (VSYAVGGLLSVLLILLVTAALML) threads the bilayer. The Cytoplasmic segment spans residues 1747–1905 (YRHRKSKFTD…ERKLSSESQV (159 aa)). The interval 1853 to 1905 (SSGSLDDTETEQLLQEEQSECSSVHTATTPERRGSLPDTGWKHERKLSSESQV) is disordered. The segment covering 1872 to 1881 (ECSSVHTATT) has biased composition (polar residues). Residues 1882 to 1905 (PERRGSLPDTGWKHERKLSSESQV) are compositionally biased toward basic and acidic residues.

It belongs to the LDLR family. In terms of assembly, homooligomer. Interacts with MUSK; the heterodimer forms an AGRIN receptor complex that binds AGRIN resulting in activation of MUSK. Interacts (via the extracellular domain) with SOST; the interaction facilitates the inhibition of Wnt signaling. Interacts with MESD; the interaction promotes glycosylation of LRP4 and its cell-surface expression. In terms of processing, N-glycosylation is required for cell surface location. Expressed in different regions of the brain, mainly in the olfactory bulb, at lower level in the cerebral cortex and hippocampus.

Its subcellular location is the cell membrane. Functionally, mediates SOST-dependent inhibition of bone formation. Functions as a specific facilitator of SOST-mediated inhibition of Wnt signaling. Plays a key role in the formation and the maintenance of the neuromuscular junction (NMJ), the synapse between motor neuron and skeletal muscle. Directly binds AGRIN and recruits it to the MUSK signaling complex. Mediates the AGRIN-induced phosphorylation of MUSK, the kinase of the complex. The activation of MUSK in myotubes induces the formation of NMJ by regulating different processes including the transcription of specific genes and the clustering of AChR in the postsynaptic membrane. Alternatively, may be involved in the negative regulation of the canonical Wnt signaling pathway, being able to antagonize the LRP6-mediated activation of this pathway. More generally, has been proposed to function as a cell surface endocytic receptor binding and internalizing extracellular ligands for degradation by lysosomes. Plays an essential role in the process of digit differentiation. The sequence is that of Low-density lipoprotein receptor-related protein 4 (Lrp4) from Rattus norvegicus (Rat).